Here is a 101-residue protein sequence, read N- to C-terminus: Small ribosomal subunit protein uS14A (101 aa).

2 disordered regions span residues 1-21 (MAKK…AHHA) and 49-73 (QRLP…PRGT). Composition is skewed to basic and acidic residues over residues 8-21 (AKNE…AHHA) and 61-70 (RNRDAADGRP).

Belongs to the universal ribosomal protein uS14 family. Part of the 30S ribosomal subunit. Contacts proteins S3 and S10.

Binds 16S rRNA, required for the assembly of 30S particles and may also be responsible for determining the conformation of the 16S rRNA at the A site. In Kineococcus radiotolerans (strain ATCC BAA-149 / DSM 14245 / SRS30216), this protein is Small ribosomal subunit protein uS14A.